Consider the following 341-residue polypeptide: Dihydroorotate dehydrogenase (quinone) (341 aa).

FMN contacts are provided by residues 61–65 (AGLDK) and threonine 85. Position 65 (lysine 65) interacts with substrate. A substrate-binding site is contributed by 110–114 (NRMGF). Asparagine 138 and asparagine 171 together coordinate FMN. Substrate is bound at residue asparagine 171. Catalysis depends on serine 174, which acts as the Nucleophile. Position 176 (asparagine 176) interacts with substrate. Positions 216 and 244 each coordinate FMN. Substrate is bound at residue 245-246 (NT). FMN contacts are provided by residues glycine 267, glycine 296, and 317 to 318 (YS).

The protein belongs to the dihydroorotate dehydrogenase family. Type 2 subfamily. Monomer. FMN serves as cofactor.

The protein localises to the cell membrane. It catalyses the reaction (S)-dihydroorotate + a quinone = orotate + a quinol. It participates in pyrimidine metabolism; UMP biosynthesis via de novo pathway; orotate from (S)-dihydroorotate (quinone route): step 1/1. Its function is as follows. Catalyzes the conversion of dihydroorotate to orotate with quinone as electron acceptor. This chain is Dihydroorotate dehydrogenase (quinone), found in Pseudomonas putida (strain W619).